The following is a 363-amino-acid chain: Protein-glutamate methylesterase/protein-glutamine glutaminase 2 (363 aa).

Positions 6–123 (RVLIVDDSAS…AQFLLESKIH (118 aa)) constitute a Response regulatory domain. At D57 the chain carries 4-aspartylphosphate. The 192-residue stretch at 172–363 (ARTTESVICI…AMEILRAGNR (192 aa)) folds into the CheB-type methylesterase domain. Active-site residues include S184, H210, and D306.

The protein belongs to the CheB family. In terms of processing, phosphorylated by CheA. Phosphorylation of the N-terminal regulatory domain activates the methylesterase activity.

It localises to the cytoplasm. The catalysed reaction is [protein]-L-glutamate 5-O-methyl ester + H2O = L-glutamyl-[protein] + methanol + H(+). It catalyses the reaction L-glutaminyl-[protein] + H2O = L-glutamyl-[protein] + NH4(+). Functionally, involved in chemotaxis. Part of a chemotaxis signal transduction system that modulates chemotaxis in response to various stimuli. Catalyzes the demethylation of specific methylglutamate residues introduced into the chemoreceptors (methyl-accepting chemotaxis proteins or MCP) by CheR. Also mediates the irreversible deamidation of specific glutamine residues to glutamic acid. The chain is Protein-glutamate methylesterase/protein-glutamine glutaminase 2 from Rhodospirillum rubrum (strain ATCC 11170 / ATH 1.1.1 / DSM 467 / LMG 4362 / NCIMB 8255 / S1).